The chain runs to 408 residues: CinA-like protein (408 aa).

The protein belongs to the CinA family.

The chain is CinA-like protein from Thermotoga maritima (strain ATCC 43589 / DSM 3109 / JCM 10099 / NBRC 100826 / MSB8).